Consider the following 344-residue polypeptide: Ferrochelatase (344 aa).

His-214 and Glu-295 together coordinate Fe cation.

This sequence belongs to the ferrochelatase family.

The protein resides in the cytoplasm. It carries out the reaction heme b + 2 H(+) = protoporphyrin IX + Fe(2+). Its pathway is porphyrin-containing compound metabolism; protoheme biosynthesis; protoheme from protoporphyrin-IX: step 1/1. Its function is as follows. Catalyzes the ferrous insertion into protoporphyrin IX. The protein is Ferrochelatase of Allorhizobium ampelinum (strain ATCC BAA-846 / DSM 112012 / S4) (Agrobacterium vitis (strain S4)).